Reading from the N-terminus, the 411-residue chain is Alpha-1-antiproteinase (411 aa).

Residues M1–A24 form the signal peptide. S33 is subject to Phosphoserine. Residues N64, N101, and N265 are each glycosylated (N-linked (GlcNAc...) asparagine). The RCL stretch occupies residues G367–H386. Phosphoserine is present on S377.

The protein belongs to the serpin family. Interacts with CELA2A. Interacts with ERGIC3 and LMAN1/ERGIC53. Interacts with PRSS1/Trypsin. As to expression, plasma.

The protein localises to the secreted. In terms of biological role, inhibitor of serine proteases. The primary target is elastase, but also has a moderate affinity for plasmin and thrombin. This Rattus norvegicus (Rat) protein is Alpha-1-antiproteinase (Serpina1).